The following is a 322-amino-acid chain: Lipoyl synthase 2 (322 aa).

A disordered region spans residues 1–36 (MKVILDLLNNDPRTTQRTERPRHPEKANRPDTPMES). The segment covering 14-34 (TTQRTERPRHPEKANRPDTPM) has biased composition (basic and acidic residues). The [4Fe-4S] cluster site is built by Cys-67, Cys-72, Cys-78, Cys-93, Cys-97, Cys-100, and Ser-306. The Radical SAM core domain maps to 79-295 (WAKKHATFMI…EKTAYAKGFL (217 aa)).

It belongs to the radical SAM superfamily. Lipoyl synthase family. [4Fe-4S] cluster is required as a cofactor.

The protein resides in the cytoplasm. It catalyses the reaction [[Fe-S] cluster scaffold protein carrying a second [4Fe-4S](2+) cluster] + N(6)-octanoyl-L-lysyl-[protein] + 2 oxidized [2Fe-2S]-[ferredoxin] + 2 S-adenosyl-L-methionine + 4 H(+) = [[Fe-S] cluster scaffold protein] + N(6)-[(R)-dihydrolipoyl]-L-lysyl-[protein] + 4 Fe(3+) + 2 hydrogen sulfide + 2 5'-deoxyadenosine + 2 L-methionine + 2 reduced [2Fe-2S]-[ferredoxin]. It functions in the pathway protein modification; protein lipoylation via endogenous pathway; protein N(6)-(lipoyl)lysine from octanoyl-[acyl-carrier-protein]: step 2/2. Its function is as follows. Catalyzes the radical-mediated insertion of two sulfur atoms into the C-6 and C-8 positions of the octanoyl moiety bound to the lipoyl domains of lipoate-dependent enzymes, thereby converting the octanoylated domains into lipoylated derivatives. In Bradyrhizobium diazoefficiens (strain JCM 10833 / BCRC 13528 / IAM 13628 / NBRC 14792 / USDA 110), this protein is Lipoyl synthase 2.